The primary structure comprises 152 residues: Ribosome maturation factor RimP (152 aa).

It belongs to the RimP family.

Its subcellular location is the cytoplasm. Required for maturation of 30S ribosomal subunits. The chain is Ribosome maturation factor RimP from Burkholderia ambifaria (strain MC40-6).